An 821-amino-acid polypeptide reads, in one-letter code: Spindle apparatus protein lin-5 (821 aa).

The disordered stretch occupies residues Glu-161 to Ser-199. The segment covering Ala-162–Gln-180 has biased composition (polar residues). Over residues Thr-181–Ser-199 the composition is skewed to low complexity. A coiled-coil region spans residues Lys-211–Lys-634. Disordered stretches follow at residues Arg-736–Ser-758 and Leu-779–Gln-821.

In terms of assembly, interacts with gpr-1; gpr-1 forms a complex with gpr-2 and GDP-bound goa-1.

The protein resides in the cytoplasm. Its subcellular location is the cell cortex. It is found in the cytoskeleton. The protein localises to the spindle. It localises to the chromosome. The protein resides in the centromere. Its subcellular location is the kinetochore. It is found in the microtubule organizing center. The protein localises to the centrosome. Functionally, essential component of the spindle apparatus required for spindle positioning and chromosome movement. Acts to recruit or anchor gpr-1/gpr-2 complex to the spindle and cortex. Also involved, directly or indirectly, in cytokinesis and in the coupling of DNA replication, centrosome duplication and mitotic division. The polypeptide is Spindle apparatus protein lin-5 (lin-5) (Caenorhabditis elegans).